A 274-amino-acid chain; its full sequence is Thiamine kinase (274 aa).

The protein belongs to the thiamine kinase family.

It carries out the reaction thiamine + ATP = thiamine phosphate + ADP + H(+). It participates in cofactor biosynthesis; thiamine diphosphate biosynthesis; thiamine phosphate from thiamine: step 1/1. In terms of biological role, catalyzes the ATP-dependent phosphorylation of thiamine to thiamine phosphate. Is involved in thiamine salvage. This chain is Thiamine kinase, found in Escherichia coli O81 (strain ED1a).